Here is a 356-residue protein sequence, read N- to C-terminus: Probable arabinogalactan endo-beta-1,4-galactanase A (356 aa).

The signal sequence occupies residues 1–21 (MLGKTVLLPLLVLLCHSLASA). Asn133 carries N-linked (GlcNAc...) asparagine glycosylation. Glu157 serves as the catalytic Proton donor. Glu268 functions as the Nucleophile in the catalytic mechanism.

The protein belongs to the glycosyl hydrolase 53 family.

It is found in the secreted. It carries out the reaction The enzyme specifically hydrolyzes (1-&gt;4)-beta-D-galactosidic linkages in type I arabinogalactans.. Its function is as follows. Endogalactanase involved in the degradation of plant cell wall polysaccharides, and more particularly of hairy regions of pectin. The sequence is that of Probable arabinogalactan endo-beta-1,4-galactanase A (galA) from Aspergillus fumigatus (strain ATCC MYA-4609 / CBS 101355 / FGSC A1100 / Af293) (Neosartorya fumigata).